Here is a 325-residue protein sequence, read N- to C-terminus: Tumor necrosis factor soluble receptor (325 aa).

An N-terminal signal peptide occupies residues 1–16 (MLRLIALLVCVVYVYG). TNFR-Cys repeat units lie at residues 27–62 (KCGG…TVCS), 63–104 (PCED…DRVC), 105–147 (NCST…TLCE), and 148–186 (KCPP…TSCT). 6 disulfides stabilise this stretch: Cys-28–Cys-39, Cys-40–Cys-53, Cys-43–Cys-61, Cys-64–Cys-79, Cys-82–Cys-96, and Cys-86–Cys-104. An N-linked (GlcNAc...) asparagine; by host glycan is attached at Asn-105. 4 disulfide bridges follow: Cys-106-Cys-120, Cys-123-Cys-146, Cys-129-Cys-149, and Cys-164-Cys-185. N-linked (GlcNAc...) asparagine; by host glycans are attached at residues Asn-181, Asn-205, and Asn-238.

Binds to TNF-alpha and beta. Probably prevents TNF to reach cellular target and thereby deampening the potential antiviral effects of the cytokine. This is Tumor necrosis factor soluble receptor from Oryctolagus cuniculus (Rabbit).